The primary structure comprises 76 residues: uncharacterized protein (76 aa).

A helical membrane pass occupies residues 12–32 (LPCGAFFISVLFFFNAVCIVS).

It localises to the cell membrane. This is an uncharacterized protein from Escherichia coli O157:H7.